A 346-amino-acid polypeptide reads, in one-letter code: Putative transmembrane protein ORF346 (346 aa).

A run of 6 helical transmembrane segments spans residues Leu67–Tyr87, Ile104–Thr124, Pro134–Tyr154, Ala156–Ile176, Ile181–Ser201, and Tyr219–Tyr241. The tract at residues Ser294–Gly346 is disordered. A compositionally biased stretch (gly residues) spans Gly302–Gly346.

The protein localises to the host membrane. This Acidianus bottle-shaped virus (isolate Italy/Pozzuoli) (ABV) protein is Putative transmembrane protein ORF346.